The primary structure comprises 573 residues: CTP synthase (573 aa).

Residues methionine 1 to leucine 281 are amidoligase domain. A CTP-binding site is contributed by serine 23. Serine 23 is a binding site for UTP. Residues serine 24–leucine 29 and aspartate 81 each bind ATP. Residues aspartate 81 and glutamate 155 each contribute to the Mg(2+) site. CTP is bound by residues aspartate 162–glutamate 164, lysine 202–glutamine 207, and lysine 238. Residues lysine 202 to glutamine 207 and lysine 238 each bind UTP. Positions glutamate 306–alanine 554 constitute a Glutamine amidotransferase type-1 domain. Glycine 369 serves as a coordination point for L-glutamine. Cysteine 396 functions as the Nucleophile; for glutamine hydrolysis in the catalytic mechanism. L-glutamine contacts are provided by residues leucine 397–glutamine 400, glutamate 419, and arginine 480. Catalysis depends on residues histidine 527 and glutamate 529.

It belongs to the CTP synthase family. As to quaternary structure, homotetramer.

It carries out the reaction UTP + L-glutamine + ATP + H2O = CTP + L-glutamate + ADP + phosphate + 2 H(+). The catalysed reaction is L-glutamine + H2O = L-glutamate + NH4(+). The enzyme catalyses UTP + NH4(+) + ATP = CTP + ADP + phosphate + 2 H(+). It functions in the pathway pyrimidine metabolism; CTP biosynthesis via de novo pathway; CTP from UDP: step 2/2. Allosterically activated by GTP, when glutamine is the substrate; GTP has no effect on the reaction when ammonia is the substrate. The allosteric effector GTP functions by stabilizing the protein conformation that binds the tetrahedral intermediate(s) formed during glutamine hydrolysis. Inhibited by the product CTP, via allosteric rather than competitive inhibition. Its function is as follows. Catalyzes the ATP-dependent amination of UTP to CTP with either L-glutamine or ammonia as the source of nitrogen. Regulates intracellular CTP levels through interactions with the four ribonucleotide triphosphates. The chain is CTP synthase from Nocardia farcinica (strain IFM 10152).